The chain runs to 202 residues: MATLIYVDKENGEPGTRVVAKDGLKLGSGPSIKALDGRSQVSTPRFGKTFDAPPALPKATRKALGTVNRATEKSVKTKGPLKQKQPSFSAKKMTEKTVKAKSSVPASDDAYPEIEKFFPFNPLDFESFDLPEEHQIAHLPLSGVPLMILDEERELEKLFQLGPPSPVKMPSPPWESNLLQSPSSILSTLDVELPPVCCDIDI.

At Ala2 the chain carries N-acetylalanine. The tract at residues 35 to 90 is disordered; sequence LDGRSQVSTPRFGKTFDAPPALPKATRKALGTVNRATEKSVKTKGPLKQKQPSFSA. The D-box motif lies at 61–64; the sequence is RKAL. 2 consecutive short sequence motifs (TEK-box) follow at residues 71–73 and 94–96; these read TEK. Positions 163 to 173 match the SH3-binding motif; it reads PPSPVKMPSPP. The residue at position 165 (Ser165) is a Phosphoserine; by CDK1.

Belongs to the securin family. In terms of assembly, interacts with RPS10 and DNAJA1. Interacts with the caspase-like ESPL1, and prevents its protease activity probably by covering its active site. Interacts with TP53 and blocks its activity probably by blocking its binding to DNA. Interacts with the Ku 70 kDa subunit of ds-DNA kinase. Interacts with PTTG1IP. Phosphorylated at Ser-165 by CDK1 during mitosis. Post-translationally, phosphorylated in vitro by ds-DNA kinase. In terms of processing, ubiquitinated through 'Lys-11' linkage of ubiquitin moieties by the anaphase promoting complex (APC) at the onset of anaphase, conducting to its degradation. 'Lys-11'-linked ubiquitination is mediated by the E2 ligase UBE2C/UBCH10. Expressed at low level in most tissues, except in adult testis, where it is highly expressed. Overexpressed in many patients suffering from pituitary adenomas, primary epithelial neoplasias, and esophageal cancer.

The protein localises to the cytoplasm. It is found in the nucleus. Its function is as follows. Regulatory protein, which plays a central role in chromosome stability, in the p53/TP53 pathway, and DNA repair. Probably acts by blocking the action of key proteins. During the mitosis, it blocks Separase/ESPL1 function, preventing the proteolysis of the cohesin complex and the subsequent segregation of the chromosomes. At the onset of anaphase, it is ubiquitinated, conducting to its destruction and to the liberation of ESPL1. Its function is however not limited to a blocking activity, since it is required to activate ESPL1. Negatively regulates the transcriptional activity and related apoptosis activity of TP53. The negative regulation of TP53 may explain the strong transforming capability of the protein when it is overexpressed. May also play a role in DNA repair via its interaction with Ku, possibly by connecting DNA damage-response pathways with sister chromatid separation. The sequence is that of Securin (PTTG1) from Homo sapiens (Human).